We begin with the raw amino-acid sequence, 273 residues long: MTLDLQTTIEKAWESRANLSPADASAEVREAVEHTIDALDQGRLRVADKSSGEWIVHQWIKKAVLLSFRLQDNEVMGEAPLTFYDKVQTKFADFGAAAFKAGGYRVVPPAVARRGSFIGRNVVLMPSYVNIGAYVDEGTMVDTWATVGSCAQIGKNVHLSGGVGIGGVLEPLQANPTIIEDNCFIGARSEVVEGVVVEENSVLAMGVFLSQSTKIFDRATGTITYGRVPSGSVVVPGSLPSADGSHSLACAVIVKRVDAQTRAKTSINDLLRA.

Substrate-binding residues include R105 and D142.

This sequence belongs to the transferase hexapeptide repeat family. Homotrimer.

The protein localises to the cytoplasm. The enzyme catalyses (S)-2,3,4,5-tetrahydrodipicolinate + succinyl-CoA + H2O = (S)-2-succinylamino-6-oxoheptanedioate + CoA. Its pathway is amino-acid biosynthesis; L-lysine biosynthesis via DAP pathway; LL-2,6-diaminopimelate from (S)-tetrahydrodipicolinate (succinylase route): step 1/3. This chain is 2,3,4,5-tetrahydropyridine-2,6-dicarboxylate N-succinyltransferase, found in Bordetella avium (strain 197N).